The sequence spans 286 residues: Polyamine aminopropyltransferase (286 aa).

One can recognise a PABS domain in the interval 6-239; the sequence is PVWIDEVFED…GWWSWLYASD (234 aa). Residue Q34 coordinates S-methyl-5'-thioadenosine. The spermidine site is built by H65 and D89. S-methyl-5'-thioadenosine is bound by residues E109 and 140–141; that span reads DG. The Proton acceptor role is filled by D159. 159–162 contacts spermidine; it reads DGSD. P166 contributes to the S-methyl-5'-thioadenosine binding site.

Belongs to the spermidine/spermine synthase family. As to quaternary structure, homodimer or homotetramer. Homodimer.

It localises to the cytoplasm. The enzyme catalyses S-adenosyl 3-(methylsulfanyl)propylamine + putrescine = S-methyl-5'-thioadenosine + spermidine + H(+). The protein operates within amine and polyamine biosynthesis; spermidine biosynthesis; spermidine from putrescine: step 1/1. Its function is as follows. Catalyzes the irreversible transfer of a propylamine group from the amino donor S-adenosylmethioninamine (decarboxy-AdoMet) to putrescine (1,4-diaminobutane) to yield spermidine. The polypeptide is Polyamine aminopropyltransferase (Synechococcus elongatus (strain ATCC 33912 / PCC 7942 / FACHB-805) (Anacystis nidulans R2)).